The chain runs to 908 residues: NADH-quinone oxidoreductase subunit G (908 aa).

The 2Fe-2S ferredoxin-type domain occupies 2–83 (ATIHVDGKEY…GTFISIDDEE (82 aa)). Cysteine 34, cysteine 45, cysteine 48, and cysteine 67 together coordinate [2Fe-2S] cluster. The 4Fe-4S His(Cys)3-ligated-type domain maps to 83 to 122 (EAKQFRESVVEWLMTNHPHDCPVCEEGGNCHLQDMTVMTG). Histidine 99, cysteine 103, cysteine 106, cysteine 112, cysteine 151, cysteine 154, cysteine 157, cysteine 201, cysteine 228, cysteine 231, cysteine 235, and cysteine 263 together coordinate [4Fe-4S] cluster. Residues 221 to 277 (MQFAPSICQQCSIGCNISPGERYGELRRIENRYNGTVNHYFLCDRGRFGYGYVNLKD) enclose the 4Fe-4S Mo/W bis-MGD-type domain.

Belongs to the complex I 75 kDa subunit family. In terms of assembly, composed of 13 different subunits. Subunits NuoCD, E, F, and G constitute the peripheral sector of the complex. [2Fe-2S] cluster serves as cofactor. The cofactor is [4Fe-4S] cluster.

The catalysed reaction is a quinone + NADH + 5 H(+)(in) = a quinol + NAD(+) + 4 H(+)(out). Its function is as follows. NDH-1 shuttles electrons from NADH, via FMN and iron-sulfur (Fe-S) centers, to quinones in the respiratory chain. The immediate electron acceptor for the enzyme in this species is believed to be ubiquinone. Couples the redox reaction to proton translocation (for every two electrons transferred, four hydrogen ions are translocated across the cytoplasmic membrane), and thus conserves the redox energy in a proton gradient. The sequence is that of NADH-quinone oxidoreductase subunit G (nuoG) from Escherichia coli O6:H1 (strain CFT073 / ATCC 700928 / UPEC).